We begin with the raw amino-acid sequence, 1222 residues long: ATP-dependent helicase/nuclease subunit A (1222 aa).

The UvrD-like helicase ATP-binding domain maps to 39–495; that stretch reads QKRTAQQIEA…ILLKENFRSQ (457 aa). Residue 60 to 67 coordinates ATP; that stretch reads ASAGSGKT. The UvrD-like helicase C-terminal domain occupies 524–810; sequence QLIAGSHAQT…NLMTIHKSKG (287 aa).

The protein belongs to the helicase family. AddA subfamily. As to quaternary structure, heterodimer of AddA and AddB/RexB. It depends on Mg(2+) as a cofactor.

It catalyses the reaction Couples ATP hydrolysis with the unwinding of duplex DNA by translocating in the 3'-5' direction.. The enzyme catalyses ATP + H2O = ADP + phosphate + H(+). In terms of biological role, the heterodimer acts as both an ATP-dependent DNA helicase and an ATP-dependent, dual-direction single-stranded exonuclease. Recognizes the chi site generating a DNA molecule suitable for the initiation of homologous recombination. The AddA nuclease domain is required for chi fragment generation; this subunit has the helicase and 3' -&gt; 5' nuclease activities. The protein is ATP-dependent helicase/nuclease subunit A of Streptococcus pyogenes serotype M2 (strain MGAS10270).